We begin with the raw amino-acid sequence, 625 residues long: DNA polymerase DpoZ (625 aa).

The interval 324-345 (NQTKGETGGDDSGTEGTGTGRL) is disordered.

It belongs to the DNA polymerase type-A family. DpoZ subfamily.

The catalysed reaction is DNA(n) + a 2'-deoxyribonucleoside 5'-triphosphate = DNA(n+1) + diphosphate. The enzyme catalyses dZTP + DNA(n) = DNA(n)-Z + diphosphate. Its function is as follows. DNA polymerase that preferentially incorporates the non-canonical base aminoadenine/dZTP instead of adenine into the synthesized DNA. More efficient in using dZTP instead of dATP as a substrate. In addition to this preference for dZTP, the phage also encodes a dATP triphosphohydrolase that removes dATP and its precursor dADP from the nucleotide pool of the host. The chain is DNA polymerase DpoZ (dpoZ) from Salmonella enterica (Salmonella choleraesuis).